Reading from the N-terminus, the 525-residue chain is Tigger transposable element-derived protein 2 (525 aa).

One can recognise an HTH psq-type domain in the interval 1–52 (MLGKRKRVVLTIKDKLDIIKKLEEGISFKKLSVVYGIGESTVRDIKKNKERI). DNA-binding regions (H-T-H motif) lie at residues 28 to 48 (FKKLSVVYGIGESTVRDIKKN) and 100 to 132 (TICAKQAKFFFDALGMEGDFNASSGWLTRFKQR). The HTH CENPB-type domain occupies 67–139 (KRKSMKSSTY…KQRHGIPKAA (73 aa)). Positions 168-385 (LQPEQIYGAD…VKSSTITKAW (218 aa)) constitute a DDE-1 domain. A disordered region spans residues 442-474 (QVLTDSESAEDQTKAAEQKPSSKSRKTELNPEK).

The protein belongs to the tigger transposable element derived protein family.

Its subcellular location is the nucleus. The polypeptide is Tigger transposable element-derived protein 2 (TIGD2) (Homo sapiens (Human)).